A 1254-amino-acid polypeptide reads, in one-letter code: Zinc finger protein BRUTUS-like At1g18910 (1254 aa).

Residues 1 to 30 (MGVGDPLPLPPEKNRREVNKPPDIASTSSS) form a disordered region. The chain crosses the membrane as a helical span at residues 454 to 474 (IHFLPLGLLKCVIMWFSAQLP). A CHY-type zinc finger spans residues 1013 to 1082 (PHKLIFGCKH…ASCSNISCSS (70 aa)). Zn(2+)-binding residues include Cys-1020, His-1022, Cys-1033, Cys-1034, Cys-1040, Cys-1043, His-1044, His-1050, Cys-1062, Cys-1065, Cys-1075, Cys-1080, Cys-1089, Cys-1092, His-1103, Cys-1104, Cys-1107, Cys-1110, His-1122, Cys-1123, Cys-1126, Cys-1129, His-1137, and Cys-1139. The CTCHY-type zinc finger occupies 1084–1147 (MGKYYCKICK…VCREKCLEDN (64 aa)). The RING-type; atypical zinc finger occupies 1148–1190 (CPICHEYIFTSNSPVKALPCGHVMHSTCFQEYTCSHYTCPICS).

Binds zinc and iron ions.

Its subcellular location is the membrane. The protein localises to the nucleus. It functions in the pathway protein modification; protein ubiquitination. Its function is as follows. Probable E3 ubiquitin-protein ligase that may regulate the response to iron deficiency and thus contributes to iron homeostasis. The protein is Zinc finger protein BRUTUS-like At1g18910 of Arabidopsis thaliana (Mouse-ear cress).